The following is a 391-amino-acid chain: 8-amino-7-oxononanoate synthase (391 aa).

Arg-19 is a substrate binding site. 106–107 contacts pyridoxal 5'-phosphate; the sequence is GY. His-131 serves as a coordination point for substrate. Pyridoxal 5'-phosphate contacts are provided by Ser-178, His-206, and Thr-234. Lys-237 carries the N6-(pyridoxal phosphate)lysine modification. Residue Thr-353 participates in substrate binding.

Belongs to the class-II pyridoxal-phosphate-dependent aminotransferase family. BioF subfamily. As to quaternary structure, homodimer. The cofactor is pyridoxal 5'-phosphate.

The catalysed reaction is 6-carboxyhexanoyl-[ACP] + L-alanine + H(+) = (8S)-8-amino-7-oxononanoate + holo-[ACP] + CO2. It participates in cofactor biosynthesis; biotin biosynthesis. In terms of biological role, catalyzes the decarboxylative condensation of pimeloyl-[acyl-carrier protein] and L-alanine to produce 8-amino-7-oxononanoate (AON), [acyl-carrier protein], and carbon dioxide. The sequence is that of 8-amino-7-oxononanoate synthase from Geobacter sulfurreducens (strain ATCC 51573 / DSM 12127 / PCA).